We begin with the raw amino-acid sequence, 185 residues long: Virulence membrane protein PagC (185 aa).

A signal peptide spans 1–23 (MKNIILSTLVITTSVLVVNVAQA).

Belongs to the outer membrane OOP (TC 1.B.6) superfamily. Ail family.

It localises to the cell outer membrane. In terms of biological role, essential for full virulence and survival within macrophages. The sequence is that of Virulence membrane protein PagC (pagC) from Salmonella typhimurium (strain LT2 / SGSC1412 / ATCC 700720).